The chain runs to 747 residues: uncharacterized protein (747 aa).

The chain crosses the membrane as a helical span at residues 7–27 (FFLKVISVIAPIVIIPTILAN).

It localises to the membrane. This is an uncharacterized protein from Ureaplasma parvum serovar 3 (strain ATCC 700970).